Consider the following 252-residue polypeptide: HTH-type transcriptional regulator XynR (252 aa).

Residues 4–66 (IQSVERALQI…PENGKYRLGM (63 aa)) form the HTH iclR-type domain. The segment at residues 25-45 (KITDISKLMGLSKSTLHSLLK) is a DNA-binding region (H-T-H motif). One can recognise an IclR-ED domain in the interval 81 to 250 (IRQKAKGWLT…GLALSRALGY (170 aa)).

Activity may be controlled by xylonate. Involved in regulation of xylonate catabolism. Represses the expression of both yagA and yagEF operons. Binds mainly at a single site within the spacer of the bidirectional transcription units yagA and yagEF. This is HTH-type transcriptional regulator XynR from Escherichia coli (strain K12).